The sequence spans 385 residues: Lipoyl synthase, mitochondrial (385 aa).

7 residues coordinate [4Fe-4S] cluster: Cys-107, Cys-112, Cys-118, Cys-137, Cys-141, Cys-144, and Ser-352. The 220-residue stretch at 122–341 (KKSEATATIM…RDTALKMGFL (220 aa)) folds into the Radical SAM core domain.

It belongs to the radical SAM superfamily. Lipoyl synthase family. Requires [4Fe-4S] cluster as cofactor.

The protein localises to the mitochondrion. The catalysed reaction is [[Fe-S] cluster scaffold protein carrying a second [4Fe-4S](2+) cluster] + N(6)-octanoyl-L-lysyl-[protein] + 2 oxidized [2Fe-2S]-[ferredoxin] + 2 S-adenosyl-L-methionine + 4 H(+) = [[Fe-S] cluster scaffold protein] + N(6)-[(R)-dihydrolipoyl]-L-lysyl-[protein] + 4 Fe(3+) + 2 hydrogen sulfide + 2 5'-deoxyadenosine + 2 L-methionine + 2 reduced [2Fe-2S]-[ferredoxin]. It functions in the pathway protein modification; protein lipoylation via endogenous pathway; protein N(6)-(lipoyl)lysine from octanoyl-[acyl-carrier-protein]: step 2/2. Functionally, catalyzes the radical-mediated insertion of two sulfur atoms into the C-6 and C-8 positions of the octanoyl moiety bound to the lipoyl domains of lipoate-dependent enzymes, thereby converting the octanoylated domains into lipoylated derivatives. This chain is Lipoyl synthase, mitochondrial, found in Meyerozyma guilliermondii (strain ATCC 6260 / CBS 566 / DSM 6381 / JCM 1539 / NBRC 10279 / NRRL Y-324) (Yeast).